The chain runs to 670 residues: DNA-binding transcriptional activator HyfR (670 aa).

In terms of domain architecture, GAF spans 169 to 311 (DLDDLIADVA…HIADRIAIAV (143 aa)). The Cys-rich segment, might bind a metal cluster signature appears at 207 to 221 (CSDLSASHCACLPRC). Residues 347-576 (IIYQSQAMED…LENVIERAVL (230 aa)) form the Sigma-54 factor interaction domain. Residues 375–382 (GETGTGKE) and 438–447 (ADGGTLFLDE) contribute to the ATP site. Positions 641–660 (PRGAATRLGMKRTTLLSRMQ) form a DNA-binding region, H-T-H motif.

A transcriptional activator of its own operon; when overexpressed operon expression is strongly enhanced by low pH (under pH 6.0), strongly inhibited by O(2) but only weakly stimulated by fumarate. Expression in situ is very weak. The polypeptide is DNA-binding transcriptional activator HyfR (Escherichia coli (strain K12)).